A 280-amino-acid chain; its full sequence is MSLSEAEKRKILRERRQQKFSRGGASERLNKIVGGQGSQLDTKSALDEKPEVVEEIPREAVKPEMNSSVQAKKESTAQAKAEDPQVELFRQLAEMQGQGATESTPDLFSMMKNLGATGDSPFPMAEQQVEAIDPELVEYHKYRVNTLTAKTTLVKWIVLLAYIFLLTRTDDTYFPFVVRSYLPEVFTSQSSFFSIFLTFEILATSIYYQLSVGVERETGVKTLQDTSKIVSLVSMVPEGILPIADLRGKVILAMKYWNIIAMMIGDVCFVLVAIGLVSQI.

3 stretches are compositionally biased toward basic and acidic residues: residues methionine 1–glutamine 17, serine 44–lysine 62, and alanine 71–lysine 80. The tract at residues methionine 1–lysine 80 is disordered. Topologically, residues methionine 1–threonine 146 are cytoplasmic. Residues leucine 147–leucine 166 traverse the membrane as a helical segment. The Lumenal portion of the chain corresponds to threonine 167–serine 191. The helical transmembrane segment at phenylalanine 192 to serine 211 threads the bilayer. Residues valine 212–asparagine 258 are Cytoplasmic-facing. The helical transmembrane segment at isoleucine 259–glutamine 279 threads the bilayer. Position 280 (isoleucine 280) is a topological domain, lumenal.

This sequence belongs to the GET2 family. Component of the Golgi to ER traffic (GET) complex, which is composed of GET1, GET2 and GET3. Within the complex, GET1 and GET2 form a heterotetramer which is stabilized by phosphatidylinositol binding and which binds to the GET3 homodimer.

It localises to the endoplasmic reticulum membrane. It is found in the golgi apparatus membrane. Its function is as follows. Required for the post-translational delivery of tail-anchored (TA) proteins to the endoplasmic reticulum. Together with GET1, acts as a membrane receptor for soluble GET3, which recognizes and selectively binds the transmembrane domain of TA proteins in the cytosol. The GET complex cooperates with the HDEL receptor ERD2 to mediate the ATP-dependent retrieval of resident ER proteins that contain a C-terminal H-D-E-L retention signal from the Golgi to the ER. In Candida glabrata (strain ATCC 2001 / BCRC 20586 / JCM 3761 / NBRC 0622 / NRRL Y-65 / CBS 138) (Yeast), this protein is Golgi to ER traffic protein 2.